A 136-amino-acid chain; its full sequence is Large ribosomal subunit protein bL20c (136 aa).

Belongs to the bacterial ribosomal protein bL20 family.

The protein localises to the plastid. It is found in the chloroplast. Functionally, binds directly to 23S ribosomal RNA and is necessary for the in vitro assembly process of the 50S ribosomal subunit. It is not involved in the protein synthesizing functions of that subunit. In Huperzia lucidula (Shining clubmoss), this protein is Large ribosomal subunit protein bL20c.